Here is a 457-residue protein sequence, read N- to C-terminus: ATP synthase subunit beta (457 aa).

Residue 147–154 participates in ATP binding; the sequence is GGAGVGKT.

This sequence belongs to the ATPase alpha/beta chains family. F-type ATPases have 2 components, CF(1) - the catalytic core - and CF(0) - the membrane proton channel. CF(1) has five subunits: alpha(3), beta(3), gamma(1), delta(1), epsilon(1). CF(0) has three main subunits: a(1), b(2) and c(9-12). The alpha and beta chains form an alternating ring which encloses part of the gamma chain. CF(1) is attached to CF(0) by a central stalk formed by the gamma and epsilon chains, while a peripheral stalk is formed by the delta and b chains.

It localises to the cell inner membrane. The enzyme catalyses ATP + H2O + 4 H(+)(in) = ADP + phosphate + 5 H(+)(out). Produces ATP from ADP in the presence of a proton gradient across the membrane. The catalytic sites are hosted primarily by the beta subunits. The protein is ATP synthase subunit beta of Glaesserella parasuis serovar 5 (strain SH0165) (Haemophilus parasuis).